The following is a 234-amino-acid chain: Prolactin-6A1 (234 aa).

Residues 1–33 (MVKSWLRMSKKMEAGTLLMLLMSNILLWENVAS) form the signal peptide. N-linked (GlcNAc...) asparagine glycosylation occurs at Asn-61. 2 disulfides stabilise this stretch: Cys-93–Cys-209 and Cys-226–Cys-234.

Belongs to the somatotropin/prolactin family.

The protein localises to the secreted. The polypeptide is Prolactin-6A1 (Prl6a1) (Rattus norvegicus (Rat)).